The following is an 86-amino-acid chain: Cell division topological specificity factor (86 aa).

Belongs to the MinE family.

Functionally, prevents the cell division inhibition by proteins MinC and MinD at internal division sites while permitting inhibition at polar sites. This ensures cell division at the proper site by restricting the formation of a division septum at the midpoint of the long axis of the cell. The polypeptide is Cell division topological specificity factor (Stenotrophomonas maltophilia (strain K279a)).